Reading from the N-terminus, the 558-residue chain is Putative ABC transporter ATP-binding protein SMU_1934c (558 aa).

ABC transporter domains follow at residues 5–246 and 295–527; these read IEFK…GIRE and FDIQ…ANLK. ATP contacts are provided by residues 39–46 and 328–335; these read GPSGSGKS and GKNGAGKS.

Belongs to the ABC transporter superfamily.

Its subcellular location is the cell membrane. In terms of biological role, probably part of an ABC transporter complex. Responsible for energy coupling to the transport system. The polypeptide is Putative ABC transporter ATP-binding protein SMU_1934c (sdcBA) (Streptococcus mutans serotype c (strain ATCC 700610 / UA159)).